The following is a 199-amino-acid chain: Nuclear protein UL4 (199 aa).

Belongs to the alphaherpesvirinae HHV-1 UL4 family.

The protein resides in the host nucleus. The sequence is that of Nuclear protein UL4 from Homo sapiens (Human).